A 262-amino-acid polypeptide reads, in one-letter code: MAKDVITRALLRPIYKIYEKILWSQIKDGPFPFHVGIIPDGNRRWARNNRLPLDQGYYTGYVKLRDVLTWILEIGISTVTVFALSAENCEKRTQQELSMIFKYLKIGLDELLTSDLVHKYQVRVKAIGMLDKLPEDLKKLVVDLESTTEKYNKKKLILAICYGGRQEILDAIRKIMNDYKLGIIDSKSIDESTFRKYLYDQELSDIDLLIRSSGEIRISNFLLWHLAYSELFFVDVYWPDFRKIDLWRAIRSFQKRKRNFGA.

The active site involves D40. Mg(2+) is bound at residue D40. Residues G41–R44, W45, and S85–E87 contribute to the substrate site. Catalysis depends on N88, which acts as the Proton acceptor. Substrate-binding positions include R92, R211, and R217–S219. Residue E230 participates in Mg(2+) binding.

It belongs to the UPP synthase family. Homodimer. Mg(2+) is required as a cofactor.

The enzyme catalyses geranylgeranyl diphosphate + 7 isopentenyl diphosphate = tri-trans,hepta-cis-undecaprenyl diphosphate + 7 diphosphate. Functionally, generates tritrans,heptacis-undecaprenyl diphosphate from isopentenyl pyrophosphate (IPP) and geranylgeranyl diphosphate. It is probably the precursor of glycosyl carrier lipids. The sequence is that of Tritrans,polycis-undecaprenyl-diphosphate synthase (GGDP specific) (uppS) from Sulfolobus acidocaldarius (strain ATCC 33909 / DSM 639 / JCM 8929 / NBRC 15157 / NCIMB 11770).